Reading from the N-terminus, the 61-residue chain is Protein translocase subunit SecE (61 aa).

The helical transmembrane segment at 39–59 threads the bilayer; the sequence is LGILVIGLVGMLIRIIGILML.

It belongs to the SecE/SEC61-gamma family. As to quaternary structure, component of the Sec protein translocase complex. Heterotrimer consisting of SecY (alpha), SecG (beta) and SecE (gamma) subunits. The heterotrimers can form oligomers, although 1 heterotrimer is thought to be able to translocate proteins. Interacts with the ribosome. May interact with SecDF, and other proteins may be involved.

It localises to the cell membrane. Its function is as follows. Essential subunit of the Sec protein translocation channel SecYEG. Clamps together the 2 halves of SecY. May contact the channel plug during translocation. In Pyrococcus horikoshii (strain ATCC 700860 / DSM 12428 / JCM 9974 / NBRC 100139 / OT-3), this protein is Protein translocase subunit SecE.